The chain runs to 1123 residues: Telomerase reverse transcriptase (1123 aa).

2 disordered regions span residues 191-242 and 410-439; these read ENKR…KTTK and GTTSQSSRRQKADKLPHGSSSSQTGKPKCP. Polar residues predominate over residues 201–210; that stretch reads QPPTKRQWLS. One can recognise a Reverse transcriptase domain in the interval 596 to 929; that stretch reads LVDDAEAESS…PFVRWTGLLI (334 aa). The Mg(2+) site is built by Asp-691, Asp-860, and Asp-861.

The protein belongs to the reverse transcriptase family. Telomerase subfamily. Component of the telomerase ribonucleoprotein complex. Interacts with POT1A.

It localises to the nucleus. It is found in the chromosome. The protein resides in the telomere. The catalysed reaction is DNA(n) + a 2'-deoxyribonucleoside 5'-triphosphate = DNA(n+1) + diphosphate. Telomerase is a ribonucleoprotein enzyme essential for the replication of chromosome termini in most eukaryotes. It elongates telomeres. It is a reverse transcriptase that adds simple sequence repeats to chromosome ends by copying a template sequence within the RNA component of the enzyme. Required to prevent genome instability induced by breakage-fusion-bridge (BFB) cycles. Can extend completely non-telomeric sequences using RNA template in vitro. The sequence is that of Telomerase reverse transcriptase (TERT) from Arabidopsis thaliana (Mouse-ear cress).